The chain runs to 280 residues: uncharacterized protein (280 aa).

This sequence belongs to the metallo-dependent hydrolases superfamily.

This is an uncharacterized protein from Methanocaldococcus jannaschii (strain ATCC 43067 / DSM 2661 / JAL-1 / JCM 10045 / NBRC 100440) (Methanococcus jannaschii).